A 1309-amino-acid chain; its full sequence is Angiotensin-converting enzyme (1309 aa).

Residues 1 to 33 (MGAASGCRWPWPPLLPLLLMLLLPPPPLPVALA) form the signal peptide. Residues 34 to 1259 (LDSALQPGNF…GLNLEEQQAR (1226 aa)) lie on the Extracellular side of the membrane. Residues asparagine 42, asparagine 58, asparagine 78, asparagine 115, asparagine 135, asparagine 150, and asparagine 164 are each glycosylated (N-linked (GlcNAc...) asparagine). 2 Peptidase M2 domains span residues 44–627 (TADE…LGWP) and 646–1225 (VSDE…LGWP). A disulfide bridge links cysteine 161 with cysteine 169. Tyrosine 235 contacts chloride. Asparagine 322 is a glycosylation site (N-linked (GlcNAc...) asparagine). Residues cysteine 363 and cysteine 381 are joined by a disulfide bond. Histidine 394 provides a ligand contact to Zn(2+). Residue glutamate 395 is the Proton acceptor 1 of the active site. Residues histidine 398 and glutamate 422 each contribute to the Zn(2+) site. The N-linked (GlcNAc...) asparagine glycan is linked to asparagine 512. Histidine 523 (proton donor 1) is an active-site residue. N-linked (GlcNAc...) asparagine glycosylation occurs at asparagine 526. A chloride-binding site is contributed by arginine 532. Residues cysteine 548 and cysteine 560 are joined by a disulfide bond. Residues asparagine 680, asparagine 698, asparagine 717, and asparagine 763 are each glycosylated (N-linked (GlcNAc...) asparagine). Residues cysteine 760 and cysteine 766 are joined by a disulfide bond. Positions 794 and 832 each coordinate chloride. A glycan (N-linked (GlcNAc...) asparagine) is linked at asparagine 945. A disulfide bridge links cysteine 960 with cysteine 978. Histidine 991 contacts Zn(2+). Glutamate 992 serves as the catalytic Proton acceptor 2. Zn(2+)-binding residues include histidine 995 and glutamate 1019. Residues tryptophan 1093 and arginine 1097 each coordinate chloride. Histidine 1121 (proton donor 2) is an active-site residue. Residue arginine 1130 participates in chloride binding. The cysteines at positions 1146 and 1158 are disulfide-linked. N-linked (GlcNAc...) asparagine glycans are attached at residues asparagine 1194 and asparagine 1228. A juxtamembrane stalk region spans residues 1218-1259 (HGEKLGWPQYNWTPNSARLEGSFAGTGRVNFLGLNLEEQQAR). A helical membrane pass occupies residues 1260–1280 (VGQWVLLFLGVTLLVATMGLT). Over 1281–1309 (QRLFSIRHQILRRTHRGPQFGSEVELRHS) the chain is Cytoplasmic. Phosphoserine is present on serine 1302.

It belongs to the peptidase M2 family. Monomer and homodimer; homodimerizes following binding to an inhibitor. Interacts with calmodulin (CALM1, CALM2 or CALM3); interaction takes place in the cytoplasmic region and regulates phosphorylation and proteolytic cleavage. Requires Zn(2+) as cofactor. Chloride serves as cofactor. Produced following proteolytic cleavage by secretase enzymes that cleave the transmembrane form in the juxtamembrane stalk region upstream of the transmembrane region. Cleavage can take place at different sites of the juxtamembrane stalk region. In terms of processing, phosphorylated by CK2 on Ser-1302; which allows membrane retention. Phosphorylated on tyrosine residues on its extracellular part, promoting cleavage by secretase enzymes and formation of the soluble form (Angiotensin-converting enzyme, soluble form).

The protein resides in the cell membrane. Its subcellular location is the cytoplasm. The protein localises to the secreted. It carries out the reaction Release of a C-terminal dipeptide, oligopeptide-|-Xaa-Yaa, when Xaa is not Pro, and Yaa is neither Asp nor Glu. Thus, conversion of angiotensin I to angiotensin II, with increase in vasoconstrictor activity, but no action on angiotensin II.. The catalysed reaction is angiotensin I + H2O = L-histidyl-L-leucine + angiotensin II. The enzyme catalyses bradykinin + H2O = L-Phe-L-Arg + bradykinin(1-7). It catalyses the reaction substance P + H2O = substance P(1-9) + L-Leu-L-Met-NH2. It carries out the reaction substance P + H2O = substance P(1-8) + Gly-L-Leu-L-Met-NH2. The catalysed reaction is substance P + H2O = L-Phe-L-Phe-Gly-L-Leu-L-Met-NH2 + substance P(1-6). The enzyme catalyses neurotensin + H2O = neurotensin(1-11) + L-isoleucyl-L-leucine. It catalyses the reaction goralatide + H2O = N-acetyl-L-seryl-L-aspartate + L-lysyl-L-proline. It carries out the reaction Met-enkephalin + H2O = L-phenylalanyl-L-methionine + L-tyrosylglycylglycine. The catalysed reaction is Leu-enkephalin + H2O = L-tyrosylglycylglycine + L-phenylalanyl-L-leucine. The enzyme catalyses Met-enkephalin-Arg-Phe + H2O = L-arginyl-L-phenylalanine + Met-enkephalin. The dipeptidyl carboxypeptidase activity is strongly activated by chloride. The dipeptidyl carboxypeptidase activity is specifically inhibited by lisinopril, captopril and enalaprilat. Functionally, dipeptidyl carboxypeptidase that removes dipeptides from the C-terminus of a variety of circulating hormones, such as angiotensin I, bradykinin or enkephalins, thereby playing a key role in the regulation of blood pressure, electrolyte homeostasis or synaptic plasticity. Composed of two similar catalytic domains, each possessing a functional active site, with different selectivity for substrates. Plays a major role in the angiotensin-renin system that regulates blood pressure and sodium retention by the kidney by converting angiotensin I to angiotensin II, resulting in an increase of the vasoconstrictor activity of angiotensin. Also able to inactivate bradykinin, a potent vasodilator, and therefore enhance the blood pressure response. Acts as a regulator of synaptic transmission by mediating cleavage of neuropeptide hormones, such as substance P, neurotensin or enkephalins. Catalyzes degradation of different enkephalin neuropeptides (Met-enkephalin, Leu-enkephalin, Met-enkephalin-Arg-Phe and possibly Met-enkephalin-Arg-Gly-Leu). Acts as a regulator of synaptic plasticity in the nucleus accumbens of the brain by mediating cleavage of Met-enkephalin-Arg-Phe, a strong ligand of Mu-type opioid receptor OPRM1, into Met-enkephalin. Met-enkephalin-Arg-Phe cleavage by ACE decreases activation of OPRM1, leading to long-term synaptic potentiation of glutamate release. Also acts as a regulator of hematopoietic stem cell differentiation by mediating degradation of hemoregulatory peptide N-acetyl-SDKP (AcSDKP). Acts as a regulator of cannabinoid signaling pathway by mediating degradation of hemopressin, an antagonist peptide of the cannabinoid receptor CNR1. Involved in amyloid-beta metabolism by catalyzing degradation of Amyloid-beta protein 40 and Amyloid-beta protein 42 peptides, thereby preventing plaque formation. Catalyzes cleavage of cholecystokinin (maturation of Cholecystokinin-8 and Cholecystokinin-5) and Gonadoliberin-1 (both maturation and degradation) hormones. Degradation of hemoregulatory peptide N-acetyl-SDKP (AcSDKP) and amyloid-beta proteins is mediated by the N-terminal catalytic domain, while angiotensin I and cholecystokinin cleavage is mediated by the C-terminal catalytic region. Soluble form that is released in blood plasma and other body fluids following proteolytic cleavage in the juxtamembrane stalk region. The polypeptide is Angiotensin-converting enzyme (Sus scrofa (Pig)).